A 309-amino-acid polypeptide reads, in one-letter code: Cytochrome c biogenesis protein CcsA (309 aa).

8 consecutive transmembrane segments (helical) span residues 18 to 38, 43 to 63, 73 to 93, 102 to 122, 148 to 168, 216 to 236, 250 to 267, and 279 to 299; these read LGLL…GAVF, SFAV…QLLF, ISNL…GQLL, IIPS…CFVL, VMLS…VLFI, SILI…VWAN, TWAF…HMRI, and LAST…FLGI.

Belongs to the CcmF/CycK/Ccl1/NrfE/CcsA family. May interact with ccs1.

It is found in the cellular thylakoid membrane. Functionally, required during biogenesis of c-type cytochromes (cytochrome c6 and cytochrome f) at the step of heme attachment. In Prochlorococcus marinus (strain MIT 9301), this protein is Cytochrome c biogenesis protein CcsA.